A 280-amino-acid polypeptide reads, in one-letter code: Four and a half LIM domains protein 1 (280 aa).

Serine 2 carries the N-acetylserine modification. Lysine 4 is modified (N6-acetyllysine). The C4-type zinc finger occupies 7–31; that stretch reads CHYCRDPLQGKKYVQKDGRHCCLKC. 4 LIM zinc-binding domains span residues 40-92, 101-153, 162-212, and 221-276; these read CVEC…CNKC, CKGC…CVTC, CVKC…CVDC, and CAGC…CPDC. Lysine 86 is covalently cross-linked (Glycyl lysine isopeptide (Lys-Gly) (interchain with G-Cter in SUMO2)).

The protein resides in the cytoplasm. Its function is as follows. May have an involvement in muscle development or hypertrophy. Isoform 2 binds to RBP-J and plays a negative regulatory role in the RBP-J-mediated transcription in mammalian systems. This chain is Four and a half LIM domains protein 1 (Fhl1), found in Rattus norvegicus (Rat).